The primary structure comprises 128 residues: Small ribosomal subunit protein uS11 (128 aa).

The protein belongs to the universal ribosomal protein uS11 family. As to quaternary structure, part of the 30S ribosomal subunit. Interacts with proteins S7 and S18. Binds to IF-3.

Functionally, located on the platform of the 30S subunit, it bridges several disparate RNA helices of the 16S rRNA. Forms part of the Shine-Dalgarno cleft in the 70S ribosome. This chain is Small ribosomal subunit protein uS11, found in Phytoplasma australiense.